The sequence spans 417 residues: NADH-quinone oxidoreductase subunit D (417 aa).

Belongs to the complex I 49 kDa subunit family. In terms of assembly, NDH-1 is composed of 14 different subunits. Subunits NuoB, C, D, E, F, and G constitute the peripheral sector of the complex.

It is found in the cell inner membrane. The catalysed reaction is a quinone + NADH + 5 H(+)(in) = a quinol + NAD(+) + 4 H(+)(out). Functionally, NDH-1 shuttles electrons from NADH, via FMN and iron-sulfur (Fe-S) centers, to quinones in the respiratory chain. The immediate electron acceptor for the enzyme in this species is believed to be ubiquinone. Couples the redox reaction to proton translocation (for every two electrons transferred, four hydrogen ions are translocated across the cytoplasmic membrane), and thus conserves the redox energy in a proton gradient. The protein is NADH-quinone oxidoreductase subunit D of Nitrosococcus oceani (strain ATCC 19707 / BCRC 17464 / JCM 30415 / NCIMB 11848 / C-107).